The chain runs to 427 residues: Serine hydroxymethyltransferase (427 aa).

Residues Leu-118 and 122-124 (GHL) each bind (6S)-5,6,7,8-tetrahydrofolate. At Lys-227 the chain carries N6-(pyridoxal phosphate)lysine. (6S)-5,6,7,8-tetrahydrofolate-binding positions include Glu-243 and 351–353 (SPF).

This sequence belongs to the SHMT family. Homodimer. It depends on pyridoxal 5'-phosphate as a cofactor.

Its subcellular location is the cytoplasm. It carries out the reaction (6R)-5,10-methylene-5,6,7,8-tetrahydrofolate + glycine + H2O = (6S)-5,6,7,8-tetrahydrofolate + L-serine. Its pathway is one-carbon metabolism; tetrahydrofolate interconversion. It participates in amino-acid biosynthesis; glycine biosynthesis; glycine from L-serine: step 1/1. Functionally, catalyzes the reversible interconversion of serine and glycine with tetrahydrofolate (THF) serving as the one-carbon carrier. This reaction serves as the major source of one-carbon groups required for the biosynthesis of purines, thymidylate, methionine, and other important biomolecules. Also exhibits THF-independent aldolase activity toward beta-hydroxyamino acids, producing glycine and aldehydes, via a retro-aldol mechanism. In Thermotoga maritima (strain ATCC 43589 / DSM 3109 / JCM 10099 / NBRC 100826 / MSB8), this protein is Serine hydroxymethyltransferase.